An 84-amino-acid polypeptide reads, in one-letter code: Small ribosomal subunit protein bS16 (84 aa).

The protein belongs to the bacterial ribosomal protein bS16 family.

The chain is Small ribosomal subunit protein bS16 from Koribacter versatilis (strain Ellin345).